The chain runs to 291 residues: Syntaxin-1A homolog (291 aa).

The disordered stretch occupies residues 1–24 (MTKDRLSALKAAQSEDEQDDDMHM). Topologically, residues 1–266 (MTKDRLSALK…QYQSKARRKK (266 aa)) are cytoplasmic. A coiled-coil region spans residues 69–95 (NDQKTKEELDELMAVIKRAANKVRGKL). The 63-residue stretch at 193-255 (LADIEARHND…DRAVADTKKA (63 aa)) folds into the t-SNARE coiled-coil homology domain. Residues 267–287 (ICILVTGVILITGLIIFILFY) traverse the membrane as a helical; Anchor for type IV membrane protein segment. The Extracellular portion of the chain corresponds to 288–291 (AKVL).

The protein belongs to the syntaxin family. In terms of assembly, interacts (via N-terminus, in open or in closed conformation) with unc-18; the interaction is direct. Interaction in open conformation with unc-18 promotes synaptic vesicle docking and tethering. Interaction via N-terminus with unc-18 mediates the secretion of the neurotransmitter acetylcholine from cholinergic motor neurons. Interaction with unc-18 is reduced in the presence of unc-13. In terms of tissue distribution, expressed throughout the head ganglion, nerve ring, ventral cord, dorsal cord, intestine, vulva and spermatheca.

It localises to the cell membrane. Its subcellular location is the cell projection. The protein localises to the axon. It is found in the dendrite. The protein resides in the perikaryon. Functionally, plays a critical role in several secretory processes, including cuticle secretion and neurotransmitter release, and probably assists in neuronal membrane maturation or the final stages of neuronal differentiation. Plays a role in synaptic vesicle docking and tethering through its association with unc-18. Through binding to unc-18 mediates the release of the neurotransmitter acetylcholine from cholinergic motor neurons, and thereby promotes locomotory behaviors. Essential for embryonic viability and development. Has a role in dauer formation and adult life span. Required for locomotion. Probably by regulating neuronal transmission downstream of lin-3 and receptor lin-23 and phospholipase plc-3 and upstream of innexin unc-7 and egl-4/PKG in ALA neurons, involved in the decrease in pharyngeal pumping during the quiescent state that precedes each larval molt. This is Syntaxin-1A homolog from Caenorhabditis elegans.